Here is a 457-residue protein sequence, read N- to C-terminus: Glycine receptor subunit alpha-1 (457 aa).

An N-terminal signal peptide occupies residues 1-28; the sequence is MYSFNTLRLYLWETIVFFSLAASKEAEA. Residues 29-250 are Extracellular-facing; that stretch reads ARSAPKPMSP…RFHLERQMGY (222 aa). Asn-66 carries an N-linked (GlcNAc...) asparagine glycan. Arg-93 and Ser-157 together coordinate glycine. Cysteines 166 and 180 form a disulfide. 2 residues coordinate Zn(2+): Glu-220 and Asp-222. Residues Cys-226 and Cys-237 are joined by a disulfide bond. Residue 230 to 235 coordinates strychnine; that stretch reads YNTGKF. A glycine-binding site is contributed by Thr-232. His-243 is a binding site for Zn(2+). Residues 251–272 form a helical membrane-spanning segment; sequence YLIQMYIPSLLIVILSWISFWI. The Cytoplasmic portion of the chain corresponds to 273-277; sequence NMDAA. Residues 278–298 traverse the membrane as a helical segment; that stretch reads PARVGLGITTVLTMTTQSSGS. The Extracellular segment spans residues 299–309; the sequence is RASLPKVSYVK. A helical membrane pass occupies residues 310 to 330; the sequence is AIDIWMAVCLLFVFSALLEYA. Over 331–425 the chain is Cytoplasmic; sequence AVNFVSRQHK…FIQRAKKIDK (95 aa). The segment at 391–410 is disordered; the sequence is KGANNSNTTNPPPAPSKSPE. The helical transmembrane segment at 426–446 threads the bilayer; that stretch reads ISRIGFPMAFLIFNMFYWIIY. Residues 447–457 are Extracellular-facing; that stretch reads KIVRREDVHNQ.

The protein belongs to the ligand-gated ion channel (TC 1.A.9) family. Glycine receptor (TC 1.A.9.3) subfamily. GLRA1 sub-subfamily. Interacts with GLRB to form heteropentameric channels; this is probably the predominant form in vivo. Heteropentamer composed of four GLRA1 subunits and one GLRB subunit. Heteropentamer composed of two GLRA1 and three GLRB. Heteropentamer composed of three GLRA1 and two GLRB. Homopentamer (in vitro). Both homopentamers and heteropentamers form functional ion channels, but their characteristics are subtly different.

The protein resides in the postsynaptic cell membrane. It is found in the synapse. It localises to the perikaryon. Its subcellular location is the cell projection. The protein localises to the dendrite. The protein resides in the cell membrane. It catalyses the reaction chloride(in) = chloride(out). Its activity is regulated as follows. Channel opening is triggered by extracellular glycine. Channel characteristics depend on the subunit composition; heteropentameric channels are activated by lower glycine levels and display faster desensitization. Channel opening is also triggered by taurine and beta-alanine. Channel activity is potentiated by nanomolar concentrations of Zn(2+); half-maximal activation is observed with 37 nM Zn(2+). Inhibited by higher Zn(2+) levels; haf-maximal inhibition occurs at 20 uM Zn(2+). Inhibited by strychnine. Strychnine binding locks the channel in a closed conformation and prevents channel opening in response to extracellular glycine. Inhibited by lindane. Inhibited by picrotoxin. Its function is as follows. Subunit of heteromeric glycine-gated chloride channels. Plays an important role in the down-regulation of neuronal excitability. Contributes to the generation of inhibitory postsynaptic currents. Channel activity is potentiated by ethanol. Potentiation of channel activity by intoxicating levels of ethanol contribute to the sedative effects of ethanol. In Homo sapiens (Human), this protein is Glycine receptor subunit alpha-1 (GLRA1).